We begin with the raw amino-acid sequence, 633 residues long: Cyclic GMP-AMP synthase-like receptor 1 (633 aa).

Disordered regions lie at residues 23 to 80, 107 to 214, and 250 to 276; these read KVHG…HPHT, FKGP…TDPF, and REDD…RPSS. The segment covering 29–67 has biased composition (basic and acidic residues); sequence KQHESAHPPRERHTERTATKRSDETKTASRPTASHEGKT. The span at 68 to 80 shows a compositional bias: polar residues; it reads HTTNPRGQVHPHT. 3 stretches are compositionally biased toward basic and acidic residues: residues 125–143, 176–194, and 250–274; these read RKPE…DHRT, RKPD…DHRT, and REDD…DDRP. Residues glutamate 353, aspartate 355, and aspartate 455 each coordinate Mg(2+).

This sequence belongs to the mab-21 family. Mg(2+) is required as a cofactor. The cofactor is Mn(2+).

The enzyme catalyses UTP + ATP = 2',3'-cUAMP + 2 diphosphate. In terms of biological role, nucleotidyltransferase that catalyzes the formation of cyclic UMP-AMP (2',3'-cUAMP) from ATP and UTP and plays a key role in innate immunity. Acts as a key sensor of double-stranded DNA (dsDNA), the presence of dsDNA in the cytoplasm being a danger signal that triggers the immune responses. Directly binds dsDNA, activating the nucleotidyltransferase activity, leading to synthesis of 2',3'-cUAMP, a second messenger that binds to and activates Sting, thereby triggering the immune response via activation of the NF-kappa-B transcription factor. The polypeptide is Cyclic GMP-AMP synthase-like receptor 1 (Crassostrea virginica (Eastern oyster)).